A 388-amino-acid chain; its full sequence is RNA binding motif protein, X-linked-like-1 (388 aa).

The region spanning 8 to 86 is the RRM domain; the sequence is GKLFIGGLNT…KAIKVEQATK (79 aa). The span at 61 to 80 shows a compositional bias: basic and acidic residues; sequence DAKDVARDMNGKSLDGKAIK. The tract at residues 61 to 388 is disordered; the sequence is DAKDVARDMN…SDRGGGQKQI (328 aa). A Glycyl lysine isopeptide (Lys-Gly) (interchain with G-Cter in SUMO2) cross-link involves residue lysine 80. Serine 88 bears the Phosphoserine mark. Residues 148–161 are compositionally biased toward pro residues; that stretch reads RGPPPRSGGPPPKR. Composition is skewed to basic and acidic residues over residues 191–212 and 238–271; these read PRRE…DGYS and YTYR…EYSD. Residues 320–332 are compositionally biased toward low complexity; it reads SRDSYSSSRSDLY. 2 stretches are compositionally biased toward basic and acidic residues: residues 333–344 and 377–388; these read SSDRDRVGRQER and SRSDRGGGQKQI.

The protein resides in the nucleus. Its function is as follows. RNA-binding protein which may be involved in pre-mRNA splicing. The protein is RNA binding motif protein, X-linked-like-1 (Rbmxl1) of Rattus norvegicus (Rat).